The chain runs to 740 residues: ATP-dependent RNA helicase DDX1 (740 aa).

Residues 1–448 (MAAFSEMGVM…ETVHHVVVIV (448 aa)) form an interaction with dsRNA region. The Helicase ATP-binding domain occupies 2-428 (AAFSEMGVMP…SEKIMHFPTW (427 aa)). 46-53 (AETGSGKT) contributes to the ATP binding site. Residues 70–247 (DQMEGKKGKA…LKFNFGEEDF (178 aa)) enclose the B30.2/SPRY domain. Residues 370–373 (DEAD) carry the DEAD box motif. The Helicase C-terminal domain occupies 493-681 (KGEYTVRAIK…QVEPDIKVPV (189 aa)).

It belongs to the DEAD box helicase family. DDX1 subfamily. In terms of tissue distribution, detected in embryonic retina, brain, heart and liver (at protein level). Detected in embryonic retina, brain, heart, kidney and liver.

It is found in the nucleus. It localises to the cytoplasm. The protein resides in the cytoplasmic granule. The protein localises to the cytosol. Its subcellular location is the mitochondrion. The catalysed reaction is ATP + H2O = ADP + phosphate + H(+). Functionally, acts as an ATP-dependent RNA helicase, able to unwind both RNA-RNA and RNA-DNA duplexes. Possesses 5' single-stranded RNA overhang nuclease activity. Acts as a positive regulator of transcription. May be involved in 3'-end cleavage and polyadenylation of pre-mRNAs. Binds DNA and RNA. Component of the tRNA-splicing ligase complex required to facilitate the enzymatic turnover of catalytic subunit RTCB. Binds (via helicase ATP-binding domain) on both short and long poly(I:C) dsRNA. This chain is ATP-dependent RNA helicase DDX1 (DDX1), found in Gallus gallus (Chicken).